A 599-amino-acid polypeptide reads, in one-letter code: DNA-directed RNA polymerase III subunit RPC3 (599 aa).

The interval 335 to 371 (PRLDGLRPRGKGSRSVSPRPQSKRVKTEEGYTKTGDY) is disordered. The segment covering 359 to 371 (VKTEEGYTKTGDY) has biased composition (basic and acidic residues). Positions 526–547 (IYKSLSRCFERVAAERAKLPIL) are leucine-zipper.

The protein belongs to the RNA polymerase beta chain family. As to quaternary structure, component of the RNA polymerase III (Pol III) complex consisting of 17 subunits.

The protein localises to the nucleus. Its function is as follows. DNA-dependent RNA polymerase catalyzes the transcription of DNA into RNA using the four ribonucleoside triphosphates as substrates. Specific core component of RNA polymerase III which synthesizes small RNAs, such as 5S rRNA and tRNAs. In Yarrowia lipolytica (strain CLIB 122 / E 150) (Yeast), this protein is DNA-directed RNA polymerase III subunit RPC3 (RPC82).